The primary structure comprises 476 residues: Cardiolipin synthase (476 aa).

Helical transmembrane passes span 2–22 (HLLI…IIFI) and 31–51 (WAWI…YILF). 2 PLD phosphodiesterase domains span residues 207 to 234 (INYR…GDEY) and 389 to 416 (EKGF…DIRS). Active-site residues include H212, K214, D219, H394, K396, and D401.

Belongs to the phospholipase D family. Cardiolipin synthase subfamily.

The protein resides in the cell membrane. It catalyses the reaction 2 a 1,2-diacyl-sn-glycero-3-phospho-(1'-sn-glycerol) = a cardiolipin + glycerol. In terms of biological role, catalyzes the reversible phosphatidyl group transfer from one phosphatidylglycerol molecule to another to form cardiolipin (CL) (diphosphatidylglycerol) and glycerol. This chain is Cardiolipin synthase (cls), found in Clostridium perfringens (strain SM101 / Type A).